Consider the following 89-residue polypeptide: Small ribosomal subunit protein bS20 (89 aa).

The tract at residues Met1–Asn21 is disordered. The span at Ala7–Asn21 shows a compositional bias: basic residues.

It belongs to the bacterial ribosomal protein bS20 family.

Functionally, binds directly to 16S ribosomal RNA. In Acinetobacter baylyi (strain ATCC 33305 / BD413 / ADP1), this protein is Small ribosomal subunit protein bS20.